A 462-amino-acid polypeptide reads, in one-letter code: Peroxisomal membrane protein PEX31 (462 aa).

Residues 1–19 (MSEINNENLEPTSSTVAES) show a composition bias toward polar residues. Positions 1–26 (MSEINNENLEPTSSTVAESTESKNKH) are disordered. The Cytoplasmic segment spans residues 1–90 (MSEINNENLE…LSIITWSNDN (90 aa)). The chain crosses the membrane as a helical span at residues 91–111 (VSANLLGIFLFTVCVLYFGFI). The Peroxisomal portion of the chain corresponds to 112 to 175 (TRYFGHLMIV…TILSAQDVRR (64 aa)). The chain crosses the membrane as a helical span at residues 176 to 196 (LLFTIAFLSPVYIFLTVFVLS). Residues 197–462 (PNYLMLIGGL…ISDVSMSPSL (266 aa)) lie on the Cytoplasmic side of the membrane. Residues 406-425 (PTVEKATPNSHALKSEENNR) form a disordered region. S432 is subject to Phosphoserine. T435 is modified (phosphothreonine).

This sequence belongs to the PEX28-32 family. PEX30/31 subfamily.

Its subcellular location is the peroxisome membrane. This is Peroxisomal membrane protein PEX31 (PEX31) from Saccharomyces cerevisiae (strain ATCC 204508 / S288c) (Baker's yeast).